The following is a 967-amino-acid chain: Siderophore exporter MmpL4 (967 aa).

11 helical membrane passes run 26–46 (AFAV…TVFV), 210–230 (VIFI…LLLI), 242–262 (VVAV…VSLL), 303–323 (AHVI…LSFA), 333–353 (IPCA…GPAV), 384–404 (WPLP…LALP), 769–789 (WDLL…MLII), 793–813 (FIAA…SFGL), 821–841 (ILAI…LLAV), 875–895 (VVTN…VSDL), and 913–934 (TLIV…WFWW). A disordered region spans residues 943-967 (ARTPTVPSETQPAGRPLAMSSDRLG).

This sequence belongs to the resistance-nodulation-cell division (RND) (TC 2.A.6) family. MmpL subfamily. Interacts with MmpS4.

It is found in the cell inner membrane. Part of an export system, which is required for biosynthesis and secretion of siderophores. This is Siderophore exporter MmpL4 (mmpL4) from Mycobacterium tuberculosis (strain CDC 1551 / Oshkosh).